The following is a 276-amino-acid chain: Nuclear egress protein 2 (276 aa).

The Perinuclear space portion of the chain corresponds to 1–253 (MAGMGKPYGG…LFRAPRPGPP (253 aa)). Over residues 212–225 (HSSGAPGPGVAASG) the composition is skewed to low complexity. A disordered region spans residues 212-237 (HSSGAPGPGVAASGPPAPPGRGPARP). Residues 254-274 (ALLLLAAGLFLGAAIWWAVGA) traverse the membrane as a helical segment. Residues 275–276 (RL) are Nuclear-facing.

It belongs to the herpesviridae NEC2 protein family. In terms of assembly, forms a heterohexameric complex with NEC1. Phosphorylated.

The protein localises to the host nucleus inner membrane. Functionally, plays an essential role in virion nuclear egress, the first step of virion release from infected cell. Within the host nucleus, NEC1 interacts with the newly formed capsid through the vertexes and directs it to the inner nuclear membrane by associating with NEC2. Induces the budding of the capsid at the inner nuclear membrane as well as its envelopment into the perinuclear space. There, the NEC1/NEC2 complex promotes the fusion of the enveloped capsid with the outer nuclear membrane and the subsequent release of the viral capsid into the cytoplasm where it will reach the secondary budding sites in the host Golgi or trans-Golgi network. This chain is Nuclear egress protein 2, found in Homo sapiens (Human).